The chain runs to 413 residues: Protein trichome birefringence-like 9 (413 aa).

The helical; Signal-anchor for type II membrane protein transmembrane segment at Leu-22 to Met-42 threads the bilayer. Residues Gly-141–Ser-143 carry the GDS motif motif. The DCXHWCLPGXXDXWN motif signature appears at Asp-384–Asn-398.

It belongs to the PC-esterase family. TBL subfamily.

Its subcellular location is the membrane. In terms of biological role, may act as a bridging protein that binds pectin and other cell wall polysaccharides. Probably involved in maintaining esterification of pectins. May be involved in the specific O-acetylation of cell wall polymers. The protein is Protein trichome birefringence-like 9 (TBL9) of Arabidopsis thaliana (Mouse-ear cress).